A 176-amino-acid polypeptide reads, in one-letter code: Myelin basic protein (176 aa).

A compositionally biased stretch (basic residues) spans 1 to 11 (MASQKHSRGHG). Positions 1-176 (MASQKHSRGH…SRSSSPMARR (176 aa)) are disordered. Ala2 carries the post-translational modification N-acetylalanine. Phosphoserine is present on Ser7. Citrulline occurs at positions 25 and 33. Phosphoserine is present on Ser58. Asn97 carries the deamidated asparagine modification. Thr103 is modified (phosphothreonine). Deamidated glutamine is present on Gln108. At Arg111 the chain carries Symmetric dimethylarginine. Residue Ser117 is modified to Phosphoserine. Residues 134–153 (SLEHHKSSYKGYKDPHREGH) are compositionally biased toward basic and acidic residues. Positions 166–176 (RSRSSSPMARR) are enriched in polar residues. Phosphoserine is present on residues Ser167 and Ser171. Arg176 carries the citrulline modification.

The protein belongs to the myelin basic protein family. Homodimer. Post-translationally, as in other animals, several charge isomers may be produced as a result of optional post-translational modifications, such as phosphorylation of serine or threonine residues, deamidation of glutamine or asparagine residues, citrullination and methylation of arginine residues.

The protein localises to the myelin membrane. Its function is as follows. Is, with PLP, the most abundant protein component of the myelin membrane in the CNS. Plays a role in both the formation and stabilization of this compact multilayer arrangement of bilayers. Each splice variant and charge isomer may have a specialized function in the assembly of an optimized, biochemically functional myelin membrane. This is Myelin basic protein (mbp) from Xenopus laevis (African clawed frog).